The sequence spans 432 residues: Adenylosuccinate synthetase (432 aa).

GTP contacts are provided by residues 12–18 (GDEGKGK) and 40–42 (GHT). The Proton acceptor role is filled by aspartate 13. Residues aspartate 13 and glycine 40 each coordinate Mg(2+). IMP-binding positions include 13 to 16 (DEGK), 38 to 41 (NAGH), threonine 126, arginine 140, glutamine 219, threonine 234, and arginine 300. Histidine 41 functions as the Proton donor in the catalytic mechanism. 296 to 302 (STTGRPR) lines the substrate pocket. GTP contacts are provided by residues arginine 302, 328–330 (KLD), and 410–412 (STG).

It belongs to the adenylosuccinate synthetase family. In terms of assembly, homodimer. Mg(2+) serves as cofactor.

It is found in the cytoplasm. The enzyme catalyses IMP + L-aspartate + GTP = N(6)-(1,2-dicarboxyethyl)-AMP + GDP + phosphate + 2 H(+). The protein operates within purine metabolism; AMP biosynthesis via de novo pathway; AMP from IMP: step 1/2. Functionally, plays an important role in the de novo pathway of purine nucleotide biosynthesis. Catalyzes the first committed step in the biosynthesis of AMP from IMP. The sequence is that of Adenylosuccinate synthetase from Aquifex aeolicus (strain VF5).